The following is a 276-amino-acid chain: 28 kDa ribonucleoprotein, chloroplastic (276 aa).

The N-terminal 57 residues, 1–57 (MATNGCLISLPPFFTTTKSISSYPFLSTQLKPISLSSSLPTLLSLNKRTTQFPTFVS), are a transit peptide targeting the chloroplast. RRM domains follow at residues 97-175 (AKLF…KAAP) and 191-269 (YRIY…AAEE).

It localises to the plastid. It is found in the chloroplast. In terms of biological role, probably involved in the 3'-end processing of chloroplast mRNA's. The protein is 28 kDa ribonucleoprotein, chloroplastic of Nicotiana sylvestris (Wood tobacco).